Consider the following 216-residue polypeptide: Purine nucleoside phosphorylase DeoD-type (216 aa).

Phosphate is bound by residues Arg4, Arg23, and 67 to 70; that span reads RVGT. A purine D-ribonucleoside-binding positions include 159-161 and 183-184; these read EME and SD. Residue Asp184 is the Proton donor of the active site.

It belongs to the PNP/UDP phosphorylase family. Homohexamer; trimer of homodimers.

It carries out the reaction a purine D-ribonucleoside + phosphate = a purine nucleobase + alpha-D-ribose 1-phosphate. It catalyses the reaction a purine 2'-deoxy-D-ribonucleoside + phosphate = a purine nucleobase + 2-deoxy-alpha-D-ribose 1-phosphate. Its function is as follows. Catalyzes the reversible phosphorolytic breakdown of the N-glycosidic bond in the beta-(deoxy)ribonucleoside molecules, with the formation of the corresponding free purine bases and pentose-1-phosphate. The protein is Purine nucleoside phosphorylase DeoD-type of Streptococcus thermophilus.